The following is a 270-amino-acid chain: MTDRYAVMGNPIEHSKSPEIHRMFAEQTGQAIAYERMRVPLEGFEPAVRAFFASGGKGLNITVPFKEQAWVLVDRRAPRAERAGAVNTLLAEAGRLVGDNTDGTGLVRDLTVNHGAALQGRRVLVIGAGGAVRGVLPALLPEAPGEVVIANRTVARAEALVELFADQGRLSAVGFDRLQGPFDVVINGTSAGLAGELPPLPDDLLAPGATCYDMVYGDQPTPFVRWARAHGAAMAVDGLGMLVEQAAESFLIWRGVRPESAPVIAALRPE.

Shikimate is bound by residues 15–17 (SKS) and threonine 62. Lysine 66 (proton acceptor) is an active-site residue. Residues asparagine 87 and aspartate 102 each contribute to the shikimate site. NADP(+) contacts are provided by residues 127–131 (GAGGA), 151–156 (NRTVAR), and methionine 214. Tyrosine 216 contributes to the shikimate binding site. Glycine 238 contacts NADP(+).

Belongs to the shikimate dehydrogenase family. As to quaternary structure, homodimer.

It catalyses the reaction shikimate + NADP(+) = 3-dehydroshikimate + NADPH + H(+). It participates in metabolic intermediate biosynthesis; chorismate biosynthesis; chorismate from D-erythrose 4-phosphate and phosphoenolpyruvate: step 4/7. Involved in the biosynthesis of the chorismate, which leads to the biosynthesis of aromatic amino acids. Catalyzes the reversible NADPH linked reduction of 3-dehydroshikimate (DHSA) to yield shikimate (SA). The protein is Shikimate dehydrogenase (NADP(+)) of Alkalilimnicola ehrlichii (strain ATCC BAA-1101 / DSM 17681 / MLHE-1).